Consider the following 340-residue polypeptide: Uroporphyrinogen decarboxylase (340 aa).

Substrate contacts are provided by residues 21-25, D71, Y148, S203, and H316; that span reads RQAGR.

This sequence belongs to the uroporphyrinogen decarboxylase family. In terms of assembly, homodimer.

The protein resides in the cytoplasm. It catalyses the reaction uroporphyrinogen III + 4 H(+) = coproporphyrinogen III + 4 CO2. It participates in porphyrin-containing compound metabolism; protoporphyrin-IX biosynthesis; coproporphyrinogen-III from 5-aminolevulinate: step 4/4. Functionally, catalyzes the decarboxylation of four acetate groups of uroporphyrinogen-III to yield coproporphyrinogen-III. This is Uroporphyrinogen decarboxylase from Campylobacter jejuni (strain RM1221).